The sequence spans 512 residues: Cytochrome P450 26B1 (512 aa).

Cys-441 lines the heme pocket.

This sequence belongs to the cytochrome P450 family. The cofactor is heme.

It is found in the endoplasmic reticulum membrane. Its subcellular location is the microsome membrane. It catalyses the reaction all-trans-retinoate + reduced [NADPH--hemoprotein reductase] + O2 = all-trans-4-hydroxyretinoate + oxidized [NADPH--hemoprotein reductase] + H2O + H(+). The catalysed reaction is all-trans-retinoate + reduced [NADPH--hemoprotein reductase] + O2 = all-trans-18-hydroxyretinoate + oxidized [NADPH--hemoprotein reductase] + H2O + H(+). Its function is as follows. A cytochrome P450 monooxygenase involved in the metabolism of retinoates (RAs), the active metabolites of vitamin A, and critical signaling molecules in animals. RAs exist as at least four different isomers: all-trans-RA (atRA), 9-cis-RA, 13-cis-RA, and 9,13-dicis-RA, where atRA is considered to be the biologically active isomer, although 9-cis-RA and 13-cis-RA also have activity. Catalyzes the hydroxylation of atRA primarily at C-4 and C-18, thereby contributing to the regulation of atRA homeostasis and signaling. Hydroxylation of atRA limits its biological activity and initiates a degradative process leading to its eventual elimination. Involved in the convertion of atRA to all-trans-4-oxo-RA. Can oxidize all-trans-13,14-dihydroretinoate (DRA) to metabolites which could include all-trans-4-oxo-DRA, all-trans-4-hydroxy-DRA, all-trans-5,8-epoxy-DRA, and all-trans-18-hydroxy-DRA. Shows preference for the following substrates: atRA &gt; 9-cis-RA &gt; 13-cis-RA. Plays a central role in germ cell development: acts by degrading RAs in the developing testis, preventing STRA8 expression, thereby leading to delay of meiosis. Required for the maintenance of the undifferentiated state of male germ cells during embryonic development in Sertoli cells, inducing arrest in G0 phase of the cell cycle and preventing meiotic entry. Plays a role in skeletal development, both at the level of patterning and in the ossification of bone and the establishment of some synovial joints. Essential for postnatal survival. Also has a significant activity in oxidation of tazarotenic acid and may therefore metabolize that xenobiotic in vivo. The chain is Cytochrome P450 26B1 (CYP26B1) from Bos taurus (Bovine).